The primary structure comprises 1394 residues: MNQEVLNVFNPTVPAPAFNQIRITIASPDKIKSWSYGEIKKPETINYRTFKPERDGLFCARIFGPIKDYECLCGKYKRMKYKGIICEKCGVEVTLSRVRRERMGHIELAAPVAHIWFLKSLPSRIGLLLDMTLKDLERILYFEYFVVIEPGTTKLKYRQLLSEDEYLRAQDEFGETNFTAMIGAEAIREILRGMDLDKIAADLRVEIAEATTELKPKKLAKRLKIVEAFQQSGNKPEWMILTHVPVIPPDLRPLVPLDGGRFATSDLNDLYRRVINRNNRLKRLIELRAPDIIIRNEKRMLQEAVDALFDNGRRGRVITGANKRPLKSLADMLKGKQGRFRQNLLGKRVDYSGRSVIVVGPELKLHQCGLPKKMALELFKPFIYSRLDAKGHSATVKQAKKLVEKERPEVWDILDEVIREHPVMLNRAPTLHRLGIQAFEPVLIEGKAIQLHPLVCSAFNADFDGDQMAVHVPLSLEAQLEARVLMMSTNNILHPANGQPIIVPSQDIVLGLYYLSIMKEKEPGEGMMFANMAEIDHALNAKAITLATKIRGRYNGVDAEGKPYSKIYETSPGRMKIGELLPKHPKLSYDVVNKLMTKKEISNMIDAVYRHCGQKESVIFCDRIMALGFYNAFRAGISFGKDDMVVPKKKWDLVEETRALTKEYEQQYNDGLITQGEKYNKVVDAWGKCSDRVAEEMMKEISSVKKDPKTGREKQINSIYMMSHSGARGSPAQMKQLAGMRGLMAKPSGEIIESPIISNFKEGLTVMEYFNSTHGARKGLADTALKTANSGYLTRRLVDVAQDSIITERDCGSEKGIHMRAIIDAGQVVASLASRVLGRTAAEDIVEPATGNVIVPRGTMIEEWHVERINKSGIQEIKIRSVLTCETRNGVCGTCYGRDLARGTPVNMGEAVGVIAAQSIGEPGTQLTMRTFHIGGAATLADSSYVESNFEGIVRIRNRNVARNSEGDLVVMARNLAVVIVDVDGTERAVNRVQYGARLKVDEGDTIKRGQRIAEWDPYTRPILSEVDGIVAFEDLTEGSSMNETVDESTGIAKRVVTDSRSGRGPELRPAILIKGKDGKIIKLPRGGDARYALPVEAIISVDPNQTLKAGDAVARVPMESAKTRDITGGLPRVAELFEARRPKDAAIIAEISGTIRFGRDYKNKRRLSIEPADGGDAVEYLIPKGKHIHLQDGDVVEKGDFIVDGNPAPHDILAIKGVEELAAFLVNEIQEVYRLQGVHINDKHIEVIVRNMLQKVEIDDSGETDFLDGEQVDRIEFIEANEKAAEEAKKPATGHPVLLGITKASLQTRSFFSAASFQETTRVLTEAAVNGKVDPLEGLKENVIVGRLIPAGTGAQMARLRTIANSRDDLIVATRDEQSEGQPLVQGPADAAE.

Residues cysteine 71, cysteine 73, cysteine 86, and cysteine 89 each contribute to the Zn(2+) site. Aspartate 462, aspartate 464, and aspartate 466 together coordinate Mg(2+). Positions 811, 885, 892, and 895 each coordinate Zn(2+).

It belongs to the RNA polymerase beta' chain family. The RNAP catalytic core consists of 2 alpha, 1 beta, 1 beta' and 1 omega subunit. When a sigma factor is associated with the core the holoenzyme is formed, which can initiate transcription. The cofactor is Mg(2+). Zn(2+) is required as a cofactor.

The enzyme catalyses RNA(n) + a ribonucleoside 5'-triphosphate = RNA(n+1) + diphosphate. Functionally, DNA-dependent RNA polymerase catalyzes the transcription of DNA into RNA using the four ribonucleoside triphosphates as substrates. The chain is DNA-directed RNA polymerase subunit beta' from Xanthobacter autotrophicus (strain ATCC BAA-1158 / Py2).